We begin with the raw amino-acid sequence, 413 residues long: MKPRVLGMILAGGQGSRLAPLTQKRSKPSVPFGSKYRIIDFAINNFMNSGVFSIYVLTQYKAQSLTEHIQRGWRFGTFLSDYFITLVPAQMYRYEELGAVWYRGTADAVYQNMHLIDNFDADYVAIFSGDHIYKMNVEHMLEKHIESRADVTIAAYPMPRSQAHQFGVMQVDAGWRVTEFLEKVPDPPGLPENPDLSLTSMGNYIFSRRALEELLHTSISGQEDGFDFGHNVIPRALADGYHVQAYDFHRNPIPGQSNPNLYWRDVGTIDAYYEANMDLISINPEFDIYNPSWPLRTSSEFSPPAKFVHESDGRKGQAFNSVMAGGVIISGATVRDSVLGRNIRAHSYALIESCVLFDDVEVGRHSHLNRAIVDKNVKIPPGTKIGVDHDHDRERGFTVTESGVVVVPKSYTF.

Residues Tyr-102, Gly-167, 182–183, and Ser-200 contribute to the alpha-D-glucose 1-phosphate site; that span reads EK.

This sequence belongs to the bacterial/plant glucose-1-phosphate adenylyltransferase family. In terms of assembly, homotetramer.

It carries out the reaction alpha-D-glucose 1-phosphate + ATP + H(+) = ADP-alpha-D-glucose + diphosphate. It participates in glycan biosynthesis; glycogen biosynthesis. Functionally, involved in the biosynthesis of ADP-glucose, a building block required for the elongation reactions to produce glycogen. Catalyzes the reaction between ATP and alpha-D-glucose 1-phosphate (G1P) to produce pyrophosphate and ADP-Glc. This chain is Glucose-1-phosphate adenylyltransferase, found in Deinococcus deserti (strain DSM 17065 / CIP 109153 / LMG 22923 / VCD115).